The sequence spans 403 residues: Probable eukaryotic initiation factor 4A (403 aa).

The tract at residues 1-29 (MSQQDRVAPQDQDSFLDDQPGVRPIPSFD) is disordered. The Q motif signature appears at 26–54 (PSFDDMPLHQNLLRGIYSYGFEKPSSIQQ). Residues 57-230 (IAPFTRGGDI…KKFMRDPVRI (174 aa)) form the Helicase ATP-binding domain. Position 70–77 (70–77 (AQSGTGKT)) interacts with ATP. The DEAD box signature appears at 178–181 (DEAD). The Helicase C-terminal domain occupies 241-401 (GIKQFFIAVE…ELPVDFAAYL (161 aa)).

This sequence belongs to the DEAD box helicase family. eIF4A subfamily. EIF4F is a multi-subunit complex, the composition of which varies with external and internal environmental conditions. It is composed of at least EIF4A, EIF4E and EIF4G.

It catalyses the reaction ATP + H2O = ADP + phosphate + H(+). ATP-dependent RNA helicase which is a subunit of the eIF4F complex involved in cap recognition and is required for mRNA binding to ribosome. In the current model of translation initiation, eIF4A unwinds RNA secondary structures in the 5'-UTR of mRNAs which is necessary to allow efficient binding of the small ribosomal subunit, and subsequent scanning for the initiator codon. The polypeptide is Probable eukaryotic initiation factor 4A (Leishmania braziliensis).